The primary structure comprises 185 residues: Adenine phosphoribosyltransferase (185 aa).

This sequence belongs to the purine/pyrimidine phosphoribosyltransferase family. In terms of assembly, homodimer.

Its subcellular location is the cytoplasm. It carries out the reaction AMP + diphosphate = 5-phospho-alpha-D-ribose 1-diphosphate + adenine. The protein operates within purine metabolism; AMP biosynthesis via salvage pathway; AMP from adenine: step 1/1. Catalyzes a salvage reaction resulting in the formation of AMP, that is energically less costly than de novo synthesis. The sequence is that of Adenine phosphoribosyltransferase from Aliarcobacter butzleri (strain RM4018) (Arcobacter butzleri).